The following is a 101-amino-acid chain: Histone H1-like protein EM6 (101 aa).

Basic residues-rich tracts occupy residues 1 to 35 (AKKRSRSRKRSASRKRSRSRKRSASKKSSKKHVRK) and 58 to 101 (AKKK…RRRR). Positions 1–101 (AKKRSRSRKR…SRTARSRRRR (101 aa)) are disordered. Repeat copies occupy residues 3-4 (KR), 5-6 (SR), 7-8 (SR), and 9-10 (KR). A 10 X 2 AA approximate tandem repeats of [SK]-R region spans residues 3-22 (KRSRSRKRSASRKRSRSRKR). Residues 11 to 12 (SA) form a 5; approximate repeat. A run of 5 repeats spans residues 13 to 14 (SR), 15 to 16 (KR), 17 to 18 (SR), 19 to 20 (SR), and 21 to 22 (KR). The segment at 32–65 (HVRKALAAGMKNHLLAHPKGSNNFILAKKKAPRR) is globular.

As to expression, sperm.

It is found in the nucleus. It localises to the chromosome. The polypeptide is Histone H1-like protein EM6 (Ensis minor (Razor shell)).